Consider the following 247-residue polypeptide: O-methyltransferase imqG (247 aa).

Residues E84, 86–87 (GT), and A138 each bind S-adenosyl-L-methionine. The a divalent metal cation site is built by D163, D189, and N190. Residue D163 participates in substrate binding.

It belongs to the class I-like SAM-binding methyltransferase superfamily. Cation-dependent O-methyltransferase family. CCoAMT subfamily. In terms of assembly, homodimer. A divalent metal cation is required as a cofactor.

It functions in the pathway secondary metabolite biosynthesis. In terms of biological role, O-methyltransferase; part of the gene cluster that mediates the biosynthesis of imizoquins A to D, tripeptide-derived alkaloids that serve a protective role against oxidative stress that are essential for normal germination. ImqB is a canonical three-module NRPS that assembles the tripeptide backbone of the imizoquins via condensation of Trp, Tyr, and Leu-derived precursors. N-methylation by imqF and phenol oxidation by imqC, followed by cyclization via the FAD-dependent oxidase imqH carry out the three-step transformation of L-tyrosine into tetrahydroisoquinoline. Importantly, this sequence requires the presence of a free amine in the tyrosine moiety, indicating that isoquinoline formation occurs prior to peptide bond formation. The imidazolidin-4-one ring of imizoquins could form following additional oxidation of the methyl-derived bridgehead carbon by imqH. Lastly, O-methylation by imqG and leucine hydroxylation by imqE complete biosynthesis of the imizoquins. The polypeptide is O-methyltransferase imqG (Aspergillus flavus (strain ATCC 200026 / FGSC A1120 / IAM 13836 / NRRL 3357 / JCM 12722 / SRRC 167)).